The primary structure comprises 2000 residues: Myosin-14 (2000 aa).

Alanine 2 is modified (N-acetylalanine). Threonine 33 is modified (phosphothreonine). The Myosin N-terminal SH3-like domain maps to threonine 47–proline 97. Serine 56 carries the post-translational modification Phosphoserine. The 704-residue stretch at serine 101–aspartate 804 folds into the Myosin motor domain. Glycine 194–threonine 201 contacts ATP. The interval leucine 682–histidine 704 is actin-binding. An IQ domain is found at valine 807 to alanine 836. Residues leucine 866–arginine 1951 adopt a coiled-coil conformation. At serine 925 the chain carries Phosphoserine. The tract at residues arginine 1173–valine 1197 is disordered. Position 1198 is a phosphothreonine (threonine 1198). Serine 1249 and serine 1280 each carry phosphoserine. Disordered regions lie at residues glutamate 1260 to glutamate 1311, histidine 1597 to glutamate 1629, serine 1720 to glutamate 1751, alanine 1910 to valine 1942, and leucine 1967 to glutamine 2000. Residues serine 1290–glutamine 1304 show a composition bias toward basic and acidic residues. The span at serine 1720 to aspartate 1732 shows a compositional bias: basic and acidic residues. Positions valine 1971–glycine 1980 are enriched in acidic residues. Phosphoserine occurs at positions 1973 and 1985. The segment covering alanine 1981 to proline 1991 has biased composition (low complexity). A Phosphothreonine modification is found at threonine 1998.

The protein belongs to the TRAFAC class myosin-kinesin ATPase superfamily. Myosin family. Myosin is a hexameric protein that consists of 2 heavy chain subunits (MHC), 2 alkali light chain subunits (MLC) and 2 regulatory light chain subunits (MLC-2). In terms of tissue distribution, highest levels in lung, kidney, brain and colon, very low levels in liver and bladder and no expression in spleen or seminal vesicle (at protein level). Isoform 1 is expressed in liver, kidney and testis with low levels in skeletal muscle and heart. Isoform 1 and isoform 2 are expressed in brain and lung. Isoform 2 is the main isoform expressed in skeletal muscle and heart. Isoform 3 is limited to brain stem, cerebellum and spinal cord.

In terms of biological role, cellular myosin that appears to play a role in cytokinesis, cell shape, and specialized functions such as secretion and capping. The protein is Myosin-14 (Myh14) of Mus musculus (Mouse).